We begin with the raw amino-acid sequence, 121 residues long: Large ribosomal subunit protein uL14c (121 aa).

It belongs to the universal ribosomal protein uL14 family. Part of the 50S ribosomal subunit.

It is found in the plastid. The protein localises to the chloroplast. Its function is as follows. Binds to 23S rRNA. In Euglena gracilis, this protein is Large ribosomal subunit protein uL14c.